Reading from the N-terminus, the 49-residue chain is Putative exported peptide YydF (49 aa).

Functionally, suggested to be the precursor for an exported, modified peptide that has antimicrobial and/or signaling properties. Synthesis requires YydG and YydH; the peptide is proposed to be exported by the YydIJ transporter. In the absence of the transporter, the modified peptide activates the LiaRS two-component regulatory system, possibly by eliciting cell envelope stress. This activation can occur in trans in cocultured cells lacking either the transporter or the whole operon. The chain is Putative exported peptide YydF (yydF) from Bacillus subtilis (strain 168).